A 346-amino-acid chain; its full sequence is FMRFamide-related peptides type HF-1 (346 aa).

The signal sequence occupies residues 1-19 (MTSLCLTIAPAVLSLICLS). The propeptide occupies 20-45 (SYGWAEDNNGIHTLDDGDNDPFFRHN). A Phenylalanine amide modification is found at Phe-51. Positions 54 to 94 (AFVPLWDNADDSLVRKNLLTHWSEFPLSPALSSSDVFSRNS) are excised as a propeptide. At Phe-100 the chain carries Phenylalanine amide. Residues 103–109 (SYPPYQD) constitute a propeptide that is removed on maturation. Phe-115 is modified (phenylalanine amide). Residues 118 to 203 (SHQPDIDEYL…EILSNEDDLE (86 aa)) constitute a propeptide that is removed on maturation. A disordered region spans residues 137–185 (YRKRRSEDGDSKEDGLNRVARSADANQQSKNTQSNKFGKDLQKRETKKE). Positions 141-152 (RSEDGDSKEDGL) are enriched in basic and acidic residues. Residues 160–172 (DANQQSKNTQSNK) show a composition bias toward polar residues. The span at 173 to 185 (FGKDLQKRETKKE) shows a compositional bias: basic and acidic residues. A phenylalanine amide mark is found at Phe-209 and Phe-216. The propeptide occupies 219–226 (GDEDESYD). Phe-232 is modified (phenylalanine amide). The propeptide occupies 235–243 (SLRHDQEFE). Phenylalanine amide occurs at positions 249 and 256. A propeptide spanning residues 259–267 (GDEDDAREE) is cleaved from the precursor. Phe-273 carries the post-translational modification Phenylalanine amide. A propeptide spanning residues 276–283 (SSNEDEDI) is cleaved from the precursor. Position 290 is a phenylalanine amide (Phe-290). A propeptide spanning residues 293–301 (SGNEDGDVD) is cleaved from the precursor. Residues Phe-307 and Phe-314 each carry the phenylalanine amide modification. A propeptide spanning residues 317–325 (SEKEDGDVD) is cleaved from the precursor. Residues Phe-331 and Phe-338 each carry the phenylalanine amide modification. The propeptide occupies 341–346 (GDSETS).

It belongs to the FARP (FMRFamide related peptide) family. As to expression, central nervous system.

It localises to the secreted. Functionally, can function as both cardioregulatory hormones and transmitters and may regulate cardiovascular function. The polypeptide is FMRFamide-related peptides type HF-1 (Cornu aspersum (Brown garden snail)).